The primary structure comprises 340 residues: 4-hydroxy-3-methylbut-2-enyl diphosphate reductase (340 aa).

Residue C21 coordinates [4Fe-4S] cluster. (2E)-4-hydroxy-3-methylbut-2-enyl diphosphate-binding residues include H50 and H83. Dimethylallyl diphosphate is bound by residues H50 and H83. Residues H50 and H83 each contribute to the isopentenyl diphosphate site. Position 105 (C105) interacts with [4Fe-4S] cluster. H133 contributes to the (2E)-4-hydroxy-3-methylbut-2-enyl diphosphate binding site. Position 133 (H133) interacts with dimethylallyl diphosphate. H133 serves as a coordination point for isopentenyl diphosphate. E135 acts as the Proton donor in catalysis. Position 173 (T173) interacts with (2E)-4-hydroxy-3-methylbut-2-enyl diphosphate. Residue C203 participates in [4Fe-4S] cluster binding. Residues S231, S232, N233, and S276 each contribute to the (2E)-4-hydroxy-3-methylbut-2-enyl diphosphate site. S231, S232, N233, and S276 together coordinate dimethylallyl diphosphate. Positions 231, 232, 233, and 276 each coordinate isopentenyl diphosphate. The tract at residues 320–340 (KARGEPLTRSATAGDRMNADR) is disordered.

This sequence belongs to the IspH family. [4Fe-4S] cluster is required as a cofactor.

It catalyses the reaction isopentenyl diphosphate + 2 oxidized [2Fe-2S]-[ferredoxin] + H2O = (2E)-4-hydroxy-3-methylbut-2-enyl diphosphate + 2 reduced [2Fe-2S]-[ferredoxin] + 2 H(+). The catalysed reaction is dimethylallyl diphosphate + 2 oxidized [2Fe-2S]-[ferredoxin] + H2O = (2E)-4-hydroxy-3-methylbut-2-enyl diphosphate + 2 reduced [2Fe-2S]-[ferredoxin] + 2 H(+). The protein operates within isoprenoid biosynthesis; dimethylallyl diphosphate biosynthesis; dimethylallyl diphosphate from (2E)-4-hydroxy-3-methylbutenyl diphosphate: step 1/1. It participates in isoprenoid biosynthesis; isopentenyl diphosphate biosynthesis via DXP pathway; isopentenyl diphosphate from 1-deoxy-D-xylulose 5-phosphate: step 6/6. Functionally, catalyzes the conversion of 1-hydroxy-2-methyl-2-(E)-butenyl 4-diphosphate (HMBPP) into a mixture of isopentenyl diphosphate (IPP) and dimethylallyl diphosphate (DMAPP). Acts in the terminal step of the DOXP/MEP pathway for isoprenoid precursor biosynthesis. This chain is 4-hydroxy-3-methylbut-2-enyl diphosphate reductase, found in Acidothermus cellulolyticus (strain ATCC 43068 / DSM 8971 / 11B).